The chain runs to 201 residues: Prostamide/prostaglandin F synthase (201 aa).

Belongs to the peroxiredoxin-like PRXL2 family. Prostamide/prostaglandin F synthase subfamily.

It localises to the cytoplasm. The protein resides in the cytosol. It carries out the reaction prostaglandin H2 + [thioredoxin]-dithiol = prostaglandin F2alpha + [thioredoxin]-disulfide. The enzyme catalyses prostamide F2alpha + [thioredoxin]-disulfide = prostamide H2 + [thioredoxin]-dithiol. In terms of biological role, catalyzes the reduction of prostaglandin-ethanolamide H(2) (prostamide H(2)) to prostamide F(2alpha) with NADPH as proton donor. Also able to reduce prostaglandin H(2) to prostaglandin F(2alpha). The protein is Prostamide/prostaglandin F synthase (prxl2b) of Xenopus tropicalis (Western clawed frog).